A 404-amino-acid polypeptide reads, in one-letter code: Probable tRNA sulfurtransferase (404 aa).

Residues 61–166 (EAVSERLKDV…SGYSYIMCDE (106 aa)) form the THUMP domain. ATP-binding positions include 184–185 (LL), 209–210 (HF), Arg-266, Gly-288, and Gln-297.

Belongs to the ThiI family.

The protein localises to the cytoplasm. The catalysed reaction is [ThiI sulfur-carrier protein]-S-sulfanyl-L-cysteine + a uridine in tRNA + 2 reduced [2Fe-2S]-[ferredoxin] + ATP + H(+) = [ThiI sulfur-carrier protein]-L-cysteine + a 4-thiouridine in tRNA + 2 oxidized [2Fe-2S]-[ferredoxin] + AMP + diphosphate. It carries out the reaction [ThiS sulfur-carrier protein]-C-terminal Gly-Gly-AMP + S-sulfanyl-L-cysteinyl-[cysteine desulfurase] + AH2 = [ThiS sulfur-carrier protein]-C-terminal-Gly-aminoethanethioate + L-cysteinyl-[cysteine desulfurase] + A + AMP + 2 H(+). Its pathway is cofactor biosynthesis; thiamine diphosphate biosynthesis. Catalyzes the ATP-dependent transfer of a sulfur to tRNA to produce 4-thiouridine in position 8 of tRNAs, which functions as a near-UV photosensor. Also catalyzes the transfer of sulfur to the sulfur carrier protein ThiS, forming ThiS-thiocarboxylate. This is a step in the synthesis of thiazole, in the thiamine biosynthesis pathway. The sulfur is donated as persulfide by IscS. This is Probable tRNA sulfurtransferase from Bacillus cereus (strain AH187).